The following is a 541-amino-acid chain: Acyl-CoA ligase M9 (541 aa).

Position 186 to 197 (186 to 197) interacts with AMP; the sequence is AMSTSGTTGLPK. Residues 445 to 519 are AMP-binding; that stretch reads ELEAVLHQMP…DSLPRNSSGK (75 aa).

This sequence belongs to the ATP-dependent AMP-binding enzyme family.

Its pathway is secondary metabolite biosynthesis. In terms of biological role, acyl-CoA ligase; part of the gene cluster that mediates the biosynthesis of squalestatin S1 (SQS1, also known as zaragozic acid A), a heavily oxidized fungal polyketide that offers potent cholesterol lowering activity by targeting squalene synthase (SS). SQS1 is composed of a 2,8-dioxobicyclic[3.2.1]octane-3,4,5-tricarboxyclic acid core that is connected to two lipophilic polyketide arms. These initial steps feature the priming of an unusual benzoic acid starter unit onto the highly reducing polyketide synthase pks2, followed by oxaloacetate extension and product release to generate a tricarboxylic acid containing product. The phenylalanine ammonia lyase (PAL) M7 and the acyl-CoA ligase M9 are involved in transforming phenylalanine into benzoyl-CoA. The citrate synthase-like protein R3 is involved in connecting the C-alpha-carbons of the hexaketide chain and oxaloacetate to afford the tricarboxylic acid unit. The potential hydrolytic enzymes, M8 and M10, are in close proximity to pks2 and may participate in product release. On the other side, the tetraketide arm is synthesized by a the squalestatin tetraketide synthase pks1 and enzymatically esterified to the core in the last biosynthetic step, by the acetyltransferase M4. The biosynthesis of the tetraketide must involve 3 rounds of chain extension. After the first and second rounds methyl-transfer occurs, and in all rounds of extension the ketoreductase and dehydratase are active. The enoyl reductase and C-MeT of pks1 are not active in the final round of extension. The acetyltransferase M4 appears to have a broad substrate selectivity for its acyl CoA substrate, allowing the in vitro synthesis of novel squalestatins. The biosynthesis of SQS1 requires several oxidative steps likely performed by oxidoreductases M1, R1 and R2. Finally, in support of the identification of the cluster as being responsible for SQS1 production, the cluster contains a gene encoding a putative squalene synthase (SS) R6, suggesting a likely mechanism for self-resistance. This is Acyl-CoA ligase M9 from Phoma sp. (strain ATCC 20986 / MF5453).